The sequence spans 261 residues: uncharacterized protein (261 aa).

A run of 5 helical transmembrane segments spans residues 38–58, 134–154, 163–183, 195–215, and 219–239; these read FIYL…ITLL, YTLM…LALI, ILIN…TYVL, YMGL…LFFL, and HKSV…CLKV.

The protein localises to the membrane. This is an uncharacterized protein from Dictyostelium discoideum (Social amoeba).